We begin with the raw amino-acid sequence, 142 residues long: Large ribosomal subunit protein uL13 (142 aa).

The protein belongs to the universal ribosomal protein uL13 family. As to quaternary structure, part of the 50S ribosomal subunit.

Its function is as follows. This protein is one of the early assembly proteins of the 50S ribosomal subunit, although it is not seen to bind rRNA by itself. It is important during the early stages of 50S assembly. The protein is Large ribosomal subunit protein uL13 of Shewanella frigidimarina (strain NCIMB 400).